The primary structure comprises 448 residues: Homogentisate 1,2-dioxygenase (448 aa).

Residues 1–26 are disordered; it reads MNMLAPAAKNAFTPASPDRPAYQSGF. The Proton acceptor role is filled by H302. Positions 345 and 351 each coordinate Fe cation. Residues Y360 and H381 each coordinate homogentisate. Residue H381 participates in Fe cation binding.

It belongs to the homogentisate dioxygenase family. Hexamer; dimer of trimers. Fe cation serves as cofactor.

The enzyme catalyses homogentisate + O2 = 4-maleylacetoacetate + H(+). The protein operates within amino-acid degradation; L-phenylalanine degradation; acetoacetate and fumarate from L-phenylalanine: step 4/6. In terms of biological role, involved in the catabolism of homogentisate (2,5-dihydroxyphenylacetate or 2,5-OH-PhAc), a central intermediate in the degradation of phenylalanine and tyrosine. Catalyzes the oxidative ring cleavage of the aromatic ring of homogentisate to yield maleylacetoacetate. This Ralstonia nicotianae (strain ATCC BAA-1114 / GMI1000) (Ralstonia solanacearum) protein is Homogentisate 1,2-dioxygenase.